The sequence spans 200 residues: MLKYPDYLSKLISFLRKLPGIGFKTAEKLAFELLDWEQDQLEALGKAFSELSIARSHCPCCFCLKNFPESQCEFCQNNRDTSTLCIVASPKDIFSLERSQVFKGHYYVLGTLLSPLTGKHIEEERMRLLKQRIEFLNPKEIILALDATLEGDATALFLKQELAYSLASISRLALGLPIGLSFDYIDSGTLARAFSGRNPY.

The segment at 58-75 adopts a C4-type zinc-finger fold; that stretch reads CPCCFCLKNFPESQCEFC. A Toprim domain is found at 82–177; it reads STLCIVASPK…SISRLALGLP (96 aa).

The protein belongs to the RecR family.

Its function is as follows. May play a role in DNA repair. It seems to be involved in an RecBC-independent recombinational process of DNA repair. It may act with RecF and RecO. This is Recombination protein RecR from Chlamydia felis (strain Fe/C-56) (Chlamydophila felis).